A 126-amino-acid chain; its full sequence is uncharacterized protein (126 aa).

Residues 3-23 (NMIVLIIFAAFIIYMIASYVY) form a helical membrane-spanning segment. In terms of domain architecture, Rhodanese spans 39 to 123 (GYRKAQLIDV…GFKKWGGKIK (85 aa)).

Its subcellular location is the cell membrane. This is an uncharacterized protein from Bacillus subtilis (strain 168).